Here is a 368-residue protein sequence, read N- to C-terminus: Xaa-Pro dipeptidase (368 aa).

Mn(2+) is bound by residues aspartate 223, aspartate 234, histidine 298, glutamate 327, and glutamate 341.

Belongs to the peptidase M24B family. It depends on Mn(2+) as a cofactor.

The protein localises to the cytoplasm. It carries out the reaction Xaa-L-Pro dipeptide + H2O = an L-alpha-amino acid + L-proline. This chain is Xaa-Pro dipeptidase (pepQ), found in Lactobacillus delbrueckii subsp. lactis.